The sequence spans 166 residues: 3-isopropylmalate dehydratase small subunit (166 aa).

It belongs to the LeuD family. LeuD type 2 subfamily. In terms of assembly, heterodimer of LeuC and LeuD.

It carries out the reaction (2R,3S)-3-isopropylmalate = (2S)-2-isopropylmalate. It functions in the pathway amino-acid biosynthesis; L-leucine biosynthesis; L-leucine from 3-methyl-2-oxobutanoate: step 2/4. Catalyzes the isomerization between 2-isopropylmalate and 3-isopropylmalate, via the formation of 2-isopropylmaleate. The sequence is that of 3-isopropylmalate dehydratase small subunit from Nautilia profundicola (strain ATCC BAA-1463 / DSM 18972 / AmH).